Consider the following 126-residue polypeptide: Large ribosomal subunit protein eL18 (126 aa).

The protein belongs to the eukaryotic ribosomal protein eL18 family.

The protein is Large ribosomal subunit protein eL18 of Methanosarcina acetivorans (strain ATCC 35395 / DSM 2834 / JCM 12185 / C2A).